The primary structure comprises 448 residues: Na(+)-translocating NADH-quinone reductase subunit A (448 aa).

The protein belongs to the NqrA family. In terms of assembly, composed of six subunits; NqrA, NqrB, NqrC, NqrD, NqrE and NqrF.

It carries out the reaction a ubiquinone + n Na(+)(in) + NADH + H(+) = a ubiquinol + n Na(+)(out) + NAD(+). NQR complex catalyzes the reduction of ubiquinone-1 to ubiquinol by two successive reactions, coupled with the transport of Na(+) ions from the cytoplasm to the periplasm. NqrA to NqrE are probably involved in the second step, the conversion of ubisemiquinone to ubiquinol. The chain is Na(+)-translocating NADH-quinone reductase subunit A from Glaesserella parasuis serovar 5 (strain SH0165) (Haemophilus parasuis).